A 440-amino-acid chain; its full sequence is MKERILQEIKTRVNRKSWELWFSSFDVKSIEGNKVVFSVGNLFIKEWLEKKYYSVLSKAVKVVLGNDATFEITYEAFEPHSSYSEPLVKKRAVLLTPLNPDYTFENFVVGPGNSFAYHAALEVAKHPGRYNPLFIYGGVGLGKTHLLQSIGNYVVQNEPDLRVMYITSEKFLNDLVDSMKEGKLNEFREKYRKKVDILLIDDVQFLIGKTGVQTELFHTFNELHDSGKQIVICSDREPQKLSEFQDRLVSRFQMGLVAKLEPPDEETRKSIARKMLEIEHGELPEEVLNFVAENVDDNLRRLRGAIIKLLVYKETTGKEVDLKEAILLLKDFIKSNRVKAMDPIDELIEIVAKVTGASREEILSNSRNVKALTARRIGMYVAKNYLKSSLRTIAEKFNRSHPVVVDSVKKVKDSLLKGNKQLKALIDEVIGEISRRALSG.

A domain I, interacts with DnaA modulators region spans residues 1 to 69 (MKERILQEIK…VKVVLGNDAT (69 aa)). Residues 69–96 (TFEITYEAFEPHSSYSEPLVKKRAVLLT) form a domain II region. The interval 97–313 (PLNPDYTFEN…GAIIKLLVYK (217 aa)) is domain III, AAA+ region. ATP contacts are provided by Gly-140, Gly-142, Lys-143, and Thr-144. Residues 314–440 (ETTGKEVDLK…GEISRRALSG (127 aa)) are domain IV, binds dsDNA.

This sequence belongs to the DnaA family. In terms of assembly, oligomerizes as a right-handed, spiral filament on DNA at oriC.

It localises to the cytoplasm. Its function is as follows. Plays an essential role in the initiation and regulation of chromosomal replication. ATP-DnaA binds to the origin of replication (oriC) to initiate formation of the DNA replication initiation complex once per cell cycle. Binds the DnaA box (a 9 base pair repeat at the origin) and separates the double-stranded (ds)DNA. Forms a right-handed helical filament on oriC DNA; dsDNA binds to the exterior of the filament while single-stranded (ss)DNA is stabiized in the filament's interior. The ATP-DnaA-oriC complex binds and stabilizes one strand of the AT-rich DNA unwinding element (DUE), permitting loading of DNA polymerase. After initiation quickly degrades to an ADP-DnaA complex that is not apt for DNA replication. Binds acidic phospholipids. The protein is Chromosomal replication initiator protein DnaA of Thermotoga sp. (strain RQ2).